Consider the following 189-residue polypeptide: GTP cyclohydrolase 1 (189 aa).

C78, H81, and C150 together coordinate Zn(2+).

It belongs to the GTP cyclohydrolase I family. As to quaternary structure, homomer.

It carries out the reaction GTP + H2O = 7,8-dihydroneopterin 3'-triphosphate + formate + H(+). Its pathway is cofactor biosynthesis; 7,8-dihydroneopterin triphosphate biosynthesis; 7,8-dihydroneopterin triphosphate from GTP: step 1/1. This Listeria monocytogenes serotype 4a (strain HCC23) protein is GTP cyclohydrolase 1.